Reading from the N-terminus, the 310-residue chain is Homoserine kinase (310 aa).

Residue Pro91 to Cys101 coordinates ATP.

It belongs to the GHMP kinase family. Homoserine kinase subfamily.

The protein resides in the cytoplasm. The enzyme catalyses L-homoserine + ATP = O-phospho-L-homoserine + ADP + H(+). The protein operates within amino-acid biosynthesis; L-threonine biosynthesis; L-threonine from L-aspartate: step 4/5. Functionally, catalyzes the ATP-dependent phosphorylation of L-homoserine to L-homoserine phosphate. This is Homoserine kinase from Escherichia coli O139:H28 (strain E24377A / ETEC).